Reading from the N-terminus, the 476-residue chain is ATP synthase subunit beta (476 aa).

157–164 (GGAGVGKT) is an ATP binding site.

Belongs to the ATPase alpha/beta chains family. In terms of assembly, F-type ATPases have 2 components, CF(1) - the catalytic core - and CF(0) - the membrane proton channel. CF(1) has five subunits: alpha(3), beta(3), gamma(1), delta(1), epsilon(1). CF(0) has three main subunits: a(1), b(2) and c(9-12). The alpha and beta chains form an alternating ring which encloses part of the gamma chain. CF(1) is attached to CF(0) by a central stalk formed by the gamma and epsilon chains, while a peripheral stalk is formed by the delta and b chains.

It is found in the cell membrane. The enzyme catalyses ATP + H2O + 4 H(+)(in) = ADP + phosphate + 5 H(+)(out). Produces ATP from ADP in the presence of a proton gradient across the membrane. The catalytic sites are hosted primarily by the beta subunits. The protein is ATP synthase subunit beta of Mycoplasma genitalium (strain ATCC 33530 / DSM 19775 / NCTC 10195 / G37) (Mycoplasmoides genitalium).